The following is a 299-amino-acid chain: Coenzyme PQQ synthesis protein B (299 aa).

It belongs to the PqqB family.

It participates in cofactor biosynthesis; pyrroloquinoline quinone biosynthesis. Functionally, may be involved in the transport of PQQ or its precursor to the periplasm. The sequence is that of Coenzyme PQQ synthesis protein B from Xanthomonas oryzae pv. oryzae (strain MAFF 311018).